A 413-amino-acid polypeptide reads, in one-letter code: Eukaryotic initiation factor 4A-11 (413 aa).

Residues 40-68 (ESFDAMGLQENLLRGIYAYGFEKPSAIQQ) carry the Q motif motif. Residues 71 to 241 (IVPFCKGLDV…RKFMNKPVRI (171 aa)) enclose the Helicase ATP-binding domain. Position 84–91 (84–91 (AQSGTGKT)) interacts with ATP. The DEAD box signature appears at 189-192 (DEAD). Residues 252–413 (GIKQFYVNVD…ELPANVADLL (162 aa)) form the Helicase C-terminal domain.

It belongs to the DEAD box helicase family. eIF4A subfamily. As to quaternary structure, eIF4F is a multi-subunit complex, the composition of which varies with external and internal environmental conditions. It is composed of at least EIF4A, EIF4E and EIF4G.

It catalyses the reaction ATP + H2O = ADP + phosphate + H(+). In terms of biological role, ATP-dependent RNA helicase which is a subunit of the eIF4F complex involved in cap recognition and is required for mRNA binding to ribosome. In the current model of translation initiation, eIF4A unwinds RNA secondary structures in the 5'-UTR of mRNAs which is necessary to allow efficient binding of the small ribosomal subunit, and subsequent scanning for the initiator codon. The chain is Eukaryotic initiation factor 4A-11 from Nicotiana tabacum (Common tobacco).